The following is a 271-amino-acid chain: MPSPTIDPAIRARLSQEALKGMSFLEHLEELRRRIIWTFVYIAAGFGVCWWWHEQIYDFMQRPIMKALAANHLDQKLVYLNPTEPFNMYLKMAFIAGLFVASPFVLYQVWLFIAPGLYKRERRYVLPFMFSTVLLFLGGGVFGYYMVYPNALTFLIGYSHQFSPMITISEYTDLFLTIILGLGIVFEMPILVFFLALMGIVSAGWMWRNLRYSILVIFVIAAIITPTTDIMNMCVFAAPMILLYILSIGVAFLVHPKNRRKRREAQEAQEG.

The next 6 membrane-spanning stretches (helical) occupy residues 35-55, 93-113, 124-144, 178-198, 213-233, and 234-254; these read IIWT…WHEQ, AFIA…WLFI, YVLP…VFGY, IILG…LALM, SILV…IMNM, and CVFA…AFLV.

Belongs to the TatC family. As to quaternary structure, forms a complex with TatA.

It localises to the cell inner membrane. Part of the twin-arginine translocation (Tat) system that transports large folded proteins containing a characteristic twin-arginine motif in their signal peptide across membranes. The polypeptide is Sec-independent protein translocase protein TatC (Koribacter versatilis (strain Ellin345)).